Here is a 537-residue protein sequence, read N- to C-terminus: MVVVRRLRQSLVDEYGKEIYSLLKSFADVIGYSFEDEEEIKIEFNPDRPDLFSIPTLVGAAKIFYYNEPIVRSLFQASEIEVAISEGVSFIRPYFAGFVAEGPSIGSKLDDLIDYQEIIHQTVGKERKKVSIGIHDLDKTEPPFRYTTISKLERMKTYDSFEGTIEDVLQKHPKGMAYSSLLPDSRRVPAILDKNGGILSVPPIVNGIMTKIEPETRKFFVDITGMDSNSVKYAFYLLANFFQSSKYRISLPKIKGSYGPSKKEILDFNFRPYRLNLKYVSRYLGDKVSEENVILNLRKMGYVAEPGYPEVMVYVPGFRVDVMGLVDIIEDFIKSYGIENVREQYVSPGTIGSPNIFNEIKEKIRDVVVGLGFQEVMTFVLTGKYYQEDFQGEVRIENPKSEDYSVIRDRLYLNLLDLLARNKKHPLPQRIFEIGDVIVHGKQETHLCVMVEDNRSGVSTSKSILTSFLKRFSDHESKISGKKIYGCIEGRSGEIFLSGKSIGVIGEVHPSTLENFGLVNPISFFEINIQELIDQHQ.

A B5 domain is found at 268–343 (FNFRPYRLNL…KSYGIENVRE (76 aa)). Aspartate 321, aspartate 327, glutamate 330, and aspartate 331 together coordinate Mg(2+).

The protein belongs to the phenylalanyl-tRNA synthetase beta subunit family. Type 2 subfamily. In terms of assembly, tetramer of two alpha and two beta subunits. Requires Mg(2+) as cofactor.

Its subcellular location is the cytoplasm. The catalysed reaction is tRNA(Phe) + L-phenylalanine + ATP = L-phenylalanyl-tRNA(Phe) + AMP + diphosphate + H(+). In Thermoplasma volcanium (strain ATCC 51530 / DSM 4299 / JCM 9571 / NBRC 15438 / GSS1), this protein is Phenylalanine--tRNA ligase beta subunit.